A 60-amino-acid polypeptide reads, in one-letter code: MAVPKKRTSKSRKRIRNNFWKKEKNDRIASRVFSLAQSILTGRSKSFYYAIRDKLPNSSE.

It belongs to the bacterial ribosomal protein bL32 family.

Its subcellular location is the plastid. It localises to the chloroplast. The protein is Large ribosomal subunit protein bL32c of Psilotum nudum (Whisk fern).